Here is a 284-residue protein sequence, read N- to C-terminus: Nucleotide-binding protein PputGB1_0956 (284 aa).

An ATP-binding site is contributed by 8 to 15; the sequence is GRSGSGKS. 60 to 63 provides a ligand contact to GTP; sequence DARN.

This sequence belongs to the RapZ-like family.

Displays ATPase and GTPase activities. This is Nucleotide-binding protein PputGB1_0956 from Pseudomonas putida (strain GB-1).